The sequence spans 169 residues: Secreted RxLR effector protein BLN03 (169 aa).

Positions 1–21 (MRPRKYIVVVLLSIAYTMCLA) are cleaved as a signal peptide. Residues 51–54 (TEER) carry the dEER motif. A helical membrane pass occupies residues 149-169 (GSAFLFVIGFIVLLAFAMTAV).

Belongs to the RxLR effector family. Interacts with host transcription factor NAC069.

Its subcellular location is the secreted. It localises to the host membrane. Functionally, secreted effector that inhibits stress-induced relocalization of the endoplasmic reticulum tail-anchored transcription factors to the nucleus, thus affecting stress responses. The protein is Secreted RxLR effector protein BLN03 of Bremia lactucae (Lettuce downy mildew).